Here is a 371-residue protein sequence, read N- to C-terminus: Aspartate-semialdehyde dehydrogenase (371 aa).

Residues 11–14, 38–39, and Gln75 each bind NADP(+); these read RGMV and TS. Arg104 contacts phosphate. Cys137 functions as the Acyl-thioester intermediate in the catalytic mechanism. Gln164 contacts substrate. 167 to 168 contacts NADP(+); that stretch reads SG. Residue Glu243 coordinates substrate. Residue Lys246 participates in phosphate binding. Residue Arg269 participates in substrate binding. Residue His276 is the Proton acceptor of the active site. Gln352 contributes to the NADP(+) binding site.

The protein belongs to the aspartate-semialdehyde dehydrogenase family. Homodimer.

It catalyses the reaction L-aspartate 4-semialdehyde + phosphate + NADP(+) = 4-phospho-L-aspartate + NADPH + H(+). Its pathway is amino-acid biosynthesis; L-lysine biosynthesis via DAP pathway; (S)-tetrahydrodipicolinate from L-aspartate: step 2/4. It functions in the pathway amino-acid biosynthesis; L-methionine biosynthesis via de novo pathway; L-homoserine from L-aspartate: step 2/3. The protein operates within amino-acid biosynthesis; L-threonine biosynthesis; L-threonine from L-aspartate: step 2/5. Catalyzes the NADPH-dependent formation of L-aspartate-semialdehyde (L-ASA) by the reductive dephosphorylation of L-aspartyl-4-phosphate. The protein is Aspartate-semialdehyde dehydrogenase of Buchnera aphidicola subsp. Schizaphis graminum (strain Sg).